Here is a 553-residue protein sequence, read N- to C-terminus: Coiled-coil domain-containing protein 22 homolog (553 aa).

Coiled-coil stretches lie at residues 261 to 404 and 498 to 553; these read LEEL…TATQ and NVTK…VAKA.

It belongs to the CCDC22 family.

This chain is Coiled-coil domain-containing protein 22 homolog, found in Drosophila pseudoobscura pseudoobscura (Fruit fly).